Consider the following 431-residue polypeptide: Alpha-gurjunene synthase (431 aa).

Positions 126 and 130 each coordinate Mg(2+). Arginine 267 lines the (2E,6E)-farnesyl diphosphate pocket. The Mg(2+) site is built by asparagine 321 and serine 325. Lysine 328 lines the (2E,6E)-farnesyl diphosphate pocket. Mg(2+) is bound at residue glutamate 329. 412–413 (RY) is a (2E,6E)-farnesyl diphosphate binding site.

It belongs to the terpene synthase family. The cofactor is Mg(2+).

It carries out the reaction (2E,6E)-farnesyl diphosphate = (-)-alpha-gurjunene + diphosphate. It catalyses the reaction (2E,6E)-farnesyl diphosphate + H2O = 5-hydroxy-alpha-gurjunene + diphosphate. Its pathway is secondary metabolite biosynthesis; terpenoid biosynthesis. Functionally, catalyzes the conversion of (2E,6E)-farnesyl diphosphate (FPP) into the sesquiterpene alcohols (-)-alpha-gurjunene and 5-hydroxy-alpha-gurjunene. Other unidentified sesquiterpene alcohols found to be catalyzed by MTPSL4 may arise from carbocation reaction intermediates along the catalytic cascade to gurjunene being quenched by a water molecule, yielding formation of the alcohols. The polypeptide is Alpha-gurjunene synthase (Marchantia polymorpha (Common liverwort)).